Here is a 154-residue protein sequence, read N- to C-terminus: Leghemoglobin-1 (154 aa).

The region spanning 3-151 (VLTDVQVALV…LAIIIKKEMK (149 aa)) is the Globin domain. Ser-46 is a heme b binding site. Ser-46 carries the phosphoserine modification. Residue His-64 participates in O2 binding. Heme b is bound by residues Lys-67, His-98, and Lys-101. Tyr-139 carries the post-translational modification Nitrated tyrosine.

The protein belongs to the plant globin family. Monomer. Post-translationally, nitrated in effective nodules and particularly in hypoxic conditions; this mechanism may play a protective role in the symbiosis by buffering toxic peroxynitrite NO(2)(-). Nitration level decrease during nodule senescence. Phosphorylation at Ser-46 disrupts the molecular environment of its porphyrin ring oxygen binding pocket, thus leading to a reduced oxygen consumption and to the delivery of oxygen O(2) to symbiosomes. As to expression, accumulates in developing root nodules and present in roots, especially in the upper part. Detected in leaves at low levels.

It is found in the cytoplasm. It localises to the cytosol. Its subcellular location is the nucleus. Functionally, leghemoglobin that reversibly binds oxygen O(2) through a pentacoordinated heme iron. In root nodules, facilitates the diffusion of oxygen to the bacteroids while preventing the bacterial nitrogenase from being inactivated by buffering dioxygen, nitric oxide and carbon monoxide, and promoting the formation of reactive oxygen species (ROS, e.g. H(2)O(2)). This role is essential for symbiotic nitrogen fixation (SNF). This is Leghemoglobin-1 from Lupinus luteus (European yellow lupine).